The primary structure comprises 754 residues: MIETIQADWIKSEAINLENCCNDNPLKILGPHFYEEQWVIRVWMPEADEVKINFKNNTYKAESINHKWLFEAILPENPNHNYEINILRGGVTHTQHDPWSYREEWMGEVDRHLFAEGNHHHIWEKMGAHLIEEKNQKGVMFCIWAPNAKSISIIGDINSWDGRHHPMQKRLGGIWELFMPSMQEGDTYKYEIRTQQGHIYEKADPYGFLHEIRPQNGSIVSKLKNFNWNDSSWISNRDSSSQINKPISVYEMHLGSWLHESTDNKYLENNGDPRDPVPAADLKPGTRLLTYPELTKKLIPYVKERGFTHIELMPISEHPFDGSWGYQVTGWYAPTSRFGTPNEFREFVNKCHEEGIGVILDWVPGHFPKDKHGLAFFDGCHLYEHGDSRIGEHKEWGTLIFNYSRNEVRNFLVANLVYWFEEFHIDGIRVDAVASMLYRDYLRPDGEWIPNENGGNENIEAVKFLQQANHVLFQHFPGALSIAEESTTWPMVTKPTDMGGLGFNLKWNMGWMHDMLDYFEIDPWFRQFHQNSVTFSITYNYTENFMLALSHDEVVHGKSHLLHKMPGDDWKKYANTRALLTYMWTHPGKKTIFMGMEFGQRQEWNVWDDLQWELLEFEPHKGIRNLIDDLNVLYKNEPALWKNDFDPYGFQWIDCNDKSNSVISFMRRENDTNEWLVVVANFTPNTHESYKVGVPMEGFYREIFNSDGSRYGGSNKGNLGGKETINYNIHDYQNALELALPPLSVSIFKHQSKK.

The Nucleophile role is filled by D431. Catalysis depends on E484, which acts as the Proton donor.

This sequence belongs to the glycosyl hydrolase 13 family. GlgB subfamily. Monomer.

It catalyses the reaction Transfers a segment of a (1-&gt;4)-alpha-D-glucan chain to a primary hydroxy group in a similar glucan chain.. It participates in glycan biosynthesis; glycogen biosynthesis. Catalyzes the formation of the alpha-1,6-glucosidic linkages in glycogen by scission of a 1,4-alpha-linked oligosaccharide from growing alpha-1,4-glucan chains and the subsequent attachment of the oligosaccharide to the alpha-1,6 position. The sequence is that of 1,4-alpha-glucan branching enzyme GlgB from Prochlorococcus marinus (strain AS9601).